We begin with the raw amino-acid sequence, 366 residues long: Ribosomal RNA large subunit methyltransferase M (366 aa).

Residues S188, 221-224 (CPGG), D240, D260, and D277 contribute to the S-adenosyl-L-methionine site. K306 acts as the Proton acceptor in catalysis.

The protein belongs to the class I-like SAM-binding methyltransferase superfamily. RNA methyltransferase RlmE family. RlmM subfamily. Monomer.

It is found in the cytoplasm. It carries out the reaction cytidine(2498) in 23S rRNA + S-adenosyl-L-methionine = 2'-O-methylcytidine(2498) in 23S rRNA + S-adenosyl-L-homocysteine + H(+). Functionally, catalyzes the 2'-O-methylation at nucleotide C2498 in 23S rRNA. In Shigella boydii serotype 4 (strain Sb227), this protein is Ribosomal RNA large subunit methyltransferase M.